The chain runs to 419 residues: Endochitinase 2 (419 aa).

A signal peptide spans 1–18 (MHHLRALVGVGLAGLAAG). In terms of domain architecture, GH18 spans 35–343 (AQNVVYWGQN…QQAKSILVNG (309 aa)). N153 carries N-linked (GlcNAc...) asparagine glycosylation. E173 acts as the Proton donor in catalysis. Residues N237 and N256 are each glycosylated (N-linked (GlcNAc...) asparagine). The span at 350-381 (GPPSSTPATAPAPTATTMPSSTSVSSPAASPT) shows a compositional bias: low complexity. The segment at 350-386 (GPPSSTPATAPAPTATTMPSSTSVSSPAASPTGGTVP) is disordered. Residues 383 to 419 (GTVPQWGQCGGEGYSGPTQCVAPYQCVKQGDWWSSCR) enclose the CBM1 domain.

The protein belongs to the glycosyl hydrolase 18 family. Chitinase class III subfamily.

Its subcellular location is the secreted. The catalysed reaction is Random endo-hydrolysis of N-acetyl-beta-D-glucosaminide (1-&gt;4)-beta-linkages in chitin and chitodextrins.. Functionally, secreted chitinase involved in the degradation of chitin, a component of the cell walls of fungi and exoskeletal elements of some animals (including worms and arthropods). Participates in the infection process and directly acts in the penetration process of the host cuticle. This chain is Endochitinase 2 (chi2), found in Metarhizium robertsii (strain ARSEF 23 / ATCC MYA-3075) (Metarhizium anisopliae (strain ARSEF 23)).